The chain runs to 338 residues: Tagatose 1,6-diphosphate aldolase (338 aa).

The protein belongs to the aldolase LacD family.

It carries out the reaction D-tagatofuranose 1,6-bisphosphate = D-glyceraldehyde 3-phosphate + dihydroxyacetone phosphate. The protein operates within carbohydrate metabolism; D-tagatose 6-phosphate degradation; D-glyceraldehyde 3-phosphate and glycerone phosphate from D-tagatose 6-phosphate: step 2/2. The polypeptide is Tagatose 1,6-diphosphate aldolase (Listeria monocytogenes serovar 1/2a (strain ATCC BAA-679 / EGD-e)).